Consider the following 379-residue polypeptide: Cytochrome b (379 aa).

Transmembrane regions (helical) follow at residues 33 to 53, 77 to 98, 113 to 133, and 178 to 198; these read FGSL…FLAM, WMIR…FIHI, WNIG…GYVL, and FFAF…VHLL. 2 residues coordinate heme b: histidine 83 and histidine 97. Residues histidine 182 and histidine 196 each contribute to the heme b site. Histidine 201 provides a ligand contact to a ubiquinone. A run of 4 helical transmembrane segments spans residues 226–246, 288–308, 320–340, and 347–367; these read MKDI…VLFY, LGGV…PMMH, LSQC…WIGG, and FIMI…IIMP.

It belongs to the cytochrome b family. As to quaternary structure, the cytochrome bc1 complex contains 11 subunits: 3 respiratory subunits (MT-CYB, CYC1 and UQCRFS1), 2 core proteins (UQCRC1 and UQCRC2) and 6 low-molecular weight proteins (UQCRH/QCR6, UQCRB/QCR7, UQCRQ/QCR8, UQCR10/QCR9, UQCR11/QCR10 and a cleavage product of UQCRFS1). This cytochrome bc1 complex then forms a dimer. It depends on heme b as a cofactor.

It localises to the mitochondrion inner membrane. Its function is as follows. Component of the ubiquinol-cytochrome c reductase complex (complex III or cytochrome b-c1 complex) that is part of the mitochondrial respiratory chain. The b-c1 complex mediates electron transfer from ubiquinol to cytochrome c. Contributes to the generation of a proton gradient across the mitochondrial membrane that is then used for ATP synthesis. In Massoutiera mzabi (Mzab gundi), this protein is Cytochrome b (MT-CYB).